The sequence spans 435 residues: Secreted RxLR effector protein 35 (435 aa).

Residues 1 to 22 (MRGAYYIIIALCVVASSQVAAG) form the signal peptide. The RxLR-dEER motif lies at 48–65 (RFLRGSRVVHDDLANEER). Positions 336 to 357 (RPKRTTDGNTGTISLPTKPTKT) are disordered. Positions 342–354 (DGNTGTISLPTKP) are enriched in polar residues.

This sequence belongs to the RxLR effector family.

Its subcellular location is the secreted. The protein resides in the host nucleus. Functionally, secreted effector that acts as an elicitor that induces cell death in host plant cells. This Plasmopara viticola (Downy mildew of grapevine) protein is Secreted RxLR effector protein 35.